The following is a 327-amino-acid chain: E3 ubiquitin ligase Rnf121 (327 aa).

At alanine 2 the chain carries N-acetylalanine. 5 helical membrane passes run 50–70, 79–99, 100–120, 148–168, and 172–192; these read MHAE…LLLV, SYNM…TVKL, HWWR…FVTF, ATGI…NLLF, and PEDA…YGVL. The segment at 226 to 276 adopts an RING-type; atypical zinc-finger fold; the sequence is CAVCGQQIFVDVNEEGIIENTYRLSCNHVFHEFCIRGWCIVGKKQTCPYCK. A helical transmembrane segment spans residues 306–326; the sequence is LVAWQPVIIGLVQGISYILGL.

Belongs to the RNF121 family.

It localises to the endoplasmic reticulum membrane. The catalysed reaction is S-ubiquitinyl-[E2 ubiquitin-conjugating enzyme]-L-cysteine + [acceptor protein]-L-lysine = [E2 ubiquitin-conjugating enzyme]-L-cysteine + N(6)-ubiquitinyl-[acceptor protein]-L-lysine.. The protein operates within protein modification; protein ubiquitination. In terms of biological role, E3 ubiquitin ligase which accepts ubiquitin and transfers it to substrates thereby promoting their degradation by the endoplasmic reticulum-associated degradation (ERAD) pathway which is a pathway involved in ubiquitin-dependent degradation of misfolded endoplasmic reticulum proteins. May regulate the unfolded protein response to reduce endoplasmic reticulum stress. The protein is E3 ubiquitin ligase Rnf121 (Rnf121) of Mus musculus (Mouse).